Reading from the N-terminus, the 326-residue chain is Putative cell agglutination protein pfl9 (326 aa).

The signal sequence occupies residues 1-21 (MNVVKYIIFSFALAPLLLVNA). Residue asparagine 25 is glycosylated (N-linked (GlcNAc...) asparagine). Tandem repeats lie at residues 103-137 (STITTTITSGSQLYTTTITGQNTPVDTVEVVIPTA) and 138-175 (GTFTTTLTSGSSYPVATTTVRTASGTQSGEVEVITPSC). The segment at 103–175 (STITTTITSG…GEVEVITPSC (73 aa)) is 2 X 36 AA approximate tandem repeats. The region spanning 164–326 (QSGEVEVITP…RANDVTLQLY (163 aa)) is the DIPSY domain.

The protein belongs to the mam3/map4 family.

It is found in the cell surface. Functionally, may be involved in agglutination during conjugation or other aspects of colony formation. Induces flocculation when overexpressed. This is Putative cell agglutination protein pfl9 from Schizosaccharomyces pombe (strain 972 / ATCC 24843) (Fission yeast).